The sequence spans 152 residues: 3-hydroxyacyl-[acyl-carrier-protein] dehydratase FabZ (152 aa).

Histidine 58 is a catalytic residue.

Belongs to the thioester dehydratase family. FabZ subfamily.

The protein resides in the cytoplasm. The enzyme catalyses a (3R)-hydroxyacyl-[ACP] = a (2E)-enoyl-[ACP] + H2O. Functionally, involved in unsaturated fatty acids biosynthesis. Catalyzes the dehydration of short chain beta-hydroxyacyl-ACPs and long chain saturated and unsaturated beta-hydroxyacyl-ACPs. This is 3-hydroxyacyl-[acyl-carrier-protein] dehydratase FabZ from Prochlorococcus marinus (strain AS9601).